The following is a 117-amino-acid chain: MTRVRRGYIARRRRTKIRLFAATFRGAHSRLTRAATQQKMRALVSAHRDRGKQKRDFRRLWITRINAVTRENGVCYSYSRLMHNLYKRQLLLNRKILAQIAILNKNCLHIISNEIIK.

Belongs to the bacterial ribosomal protein bL20 family.

The protein resides in the plastid. It localises to the chloroplast. In terms of biological role, binds directly to 23S ribosomal RNA and is necessary for the in vitro assembly process of the 50S ribosomal subunit. It is not involved in the protein synthesizing functions of that subunit. The chain is Large ribosomal subunit protein bL20c from Acorus calamus (Sweet flag).